Reading from the N-terminus, the 409-residue chain is MDYNLALDKAIQKLHDEGRYRTFIDIEREKGAFPKAQWNRPDGGKQDITVWCGNDYLGMGQHPVVLAAMHEALEAVGAGSGGTRNISGTTAYHRRLEAEIADLHGKEAALVFSSAYIANDATLSTLRVLFPGLIIYSDSLNHASMIEGIKRNAGPKRIFRHNDVAHLRELIAADDPAAPKLIAFESVYSMDGDFGPIKEICDIADEFGALTYIDEVHAVGMYGPRGAGVAERDGLMHRIDIFNGTLAKAYGVFGGYIAASAKMVDAVRSYAPGFIFSTSLPPAIAAGAQASIAFLKTAEGQKLRDAQQMHAKVLKMRLKALGMPIIDHGSHIVPVVIGDPVHTKAVSDMLLSDYGVYVQPINFPTVPRGTERLRFTPSPVHDLKQIDGLVHAMDLLWARCALNRAEASA.

Succinyl-CoA contacts are provided by R21, S137, and K156. S189, H217, and T245 together coordinate pyridoxal 5'-phosphate. Residue K248 is part of the active site. K248 carries the N6-(pyridoxal phosphate)lysine modification. Pyridoxal 5'-phosphate is bound by residues S277 and T278. T365 contributes to the succinyl-CoA binding site.

It belongs to the class-II pyridoxal-phosphate-dependent aminotransferase family. As to quaternary structure, homodimer. Pyridoxal 5'-phosphate is required as a cofactor.

It catalyses the reaction succinyl-CoA + glycine + H(+) = 5-aminolevulinate + CO2 + CoA. It functions in the pathway porphyrin-containing compound metabolism; protoporphyrin-IX biosynthesis; 5-aminolevulinate from glycine: step 1/1. The protein is 5-aminolevulinate synthase (hemA) of Rhodobacter capsulatus (strain ATCC BAA-309 / NBRC 16581 / SB1003).